The sequence spans 447 residues: Acid phosphatase (447 aa).

Residues 1–17 form the signal peptide; it reads MKPSVATLLATVSLVYA. N-linked (GlcNAc...) asparagine glycans are attached at residues asparagine 119, asparagine 150, asparagine 177, asparagine 186, and asparagine 208. Aspartate 215 acts as the Proton donor in catalysis. N-linked (GlcNAc...) asparagine glycans are attached at residues asparagine 217, asparagine 234, asparagine 240, asparagine 315, asparagine 332, asparagine 382, and asparagine 405. A lipid anchor (GPI-like-anchor amidated serine) is attached at serine 419. Positions 420–447 are cleaved as a propeptide — removed in mature form; sequence ASSNAAVSAVAPAAGVSGLLLGLALNLL.

The GPI-like anchor contains a phosphoceramide lipid group. The anchor position has not been determined.

It is found in the cell membrane. The enzyme catalyses a phosphate monoester + H2O = an alcohol + phosphate. Its activity is regulated as follows. Inhibited by NaF, molybdate and vanadate. In terms of biological role, has both phosphomonoesterase and phosphodiesterase activity. Cleaves a broad range of phosphate esters. The protein is Acid phosphatase (phoA) of Aspergillus fumigatus (strain ATCC MYA-4609 / CBS 101355 / FGSC A1100 / Af293) (Neosartorya fumigata).